Consider the following 241-residue polypeptide: Chlorophyll a-b binding protein 6, chloroplastic (241 aa).

A chloroplast-targeting transit peptide spans 1–35 (MASNSLMSCGIAAVYPSLLSSSKSKFVSAGVPLPN). Trp-48 is a chlorophyll b binding site. Chlorophyll a-binding residues include Phe-68, Glu-87, and His-90. Residue Arg-92 participates in chlorophyll b binding. Residues 93–113 (WAMLAVPGILVPEALGYGNWV) form a helical membrane-spanning segment. Leu-129 is a binding site for chlorophyll a. The helical transmembrane segment at 132–152 (PVPWGTLPTILAIEFLAIAFV) threads the bilayer. Chlorophyll b is bound by residues Val-133, Glu-153, and Arg-156. Lys-190, Glu-191, Asn-194, Arg-196, Gln-208, and His-224 together coordinate chlorophyll a. The helical transmembrane segment at 197 to 217 (LALLAFVGFCVQQSAYPGTGP) threads the bilayer.

Belongs to the light-harvesting chlorophyll a/b-binding (LHC) protein family. As to quaternary structure, the LHC complex consists of chlorophyll a-b binding proteins. Red-emitting heterodimer with LHCA4. Interacts with LHCA5. Binds at least 14 chlorophylls (8 Chl-a and 6 Chl-b) and carotenoids such as lutein and neoxanthin. is required as a cofactor. Photoregulated by reversible phosphorylation of its threonine residues.

It is found in the plastid. It localises to the chloroplast thylakoid membrane. Functionally, the light-harvesting complex (LHC) functions as a light receptor, it captures and delivers excitation energy to photosystems with which it is closely associated. This Arabidopsis thaliana (Mouse-ear cress) protein is Chlorophyll a-b binding protein 6, chloroplastic.